A 260-amino-acid chain; its full sequence is Exosome complex component Rrp42 (260 aa).

The protein belongs to the RNase PH family. Rrp42 subfamily. Component of the archaeal exosome complex. Forms a hexameric ring-like arrangement composed of 3 Rrp41-Rrp42 heterodimers. The hexameric ring associates with a trimer of Rrp4 and/or Csl4 subunits.

It localises to the cytoplasm. Functionally, non-catalytic component of the exosome, which is a complex involved in RNA degradation. Contributes to the structuring of the Rrp41 active site. The polypeptide is Exosome complex component Rrp42 (Thermoplasma volcanium (strain ATCC 51530 / DSM 4299 / JCM 9571 / NBRC 15438 / GSS1)).